Consider the following 200-residue polypeptide: Putative NAD(P)H nitroreductase Spy0809 (200 aa).

FMN serves as cofactor.

This Streptococcus pyogenes serotype M6 (strain ATCC BAA-946 / MGAS10394) protein is Putative NAD(P)H nitroreductase Spy0809.